The chain runs to 298 residues: Ethanolamine ammonia-lyase small subunit (298 aa).

Residues 17-37 are disordered; it reads MGQDVPQPVAPSKQEGAKPQC. 3 residues coordinate adenosylcob(III)alamin: Val-210, Glu-231, and Cys-261.

Belongs to the EutC family. As to quaternary structure, the basic unit is a heterodimer which dimerizes to form tetramers. The heterotetramers trimerize; 6 large subunits form a core ring with 6 small subunits projecting outwards. It depends on adenosylcob(III)alamin as a cofactor.

The protein resides in the bacterial microcompartment. It carries out the reaction ethanolamine = acetaldehyde + NH4(+). Its pathway is amine and polyamine degradation; ethanolamine degradation. Functionally, catalyzes the deamination of various vicinal amino-alcohols to oxo compounds. Allows this organism to utilize ethanolamine as the sole source of nitrogen and carbon in the presence of external vitamin B12. This chain is Ethanolamine ammonia-lyase small subunit, found in Salmonella paratyphi A (strain ATCC 9150 / SARB42).